We begin with the raw amino-acid sequence, 530 residues long: C2H2-type transcription factor MSN2 (530 aa).

2 C2H2-type zinc fingers span residues 409 to 432 and 438 to 460; these read FVCD…RSLH and FECN…ARTH.

It is found in the nucleus. It localises to the cytoplasm. Functionally, transcription factor that acts as a key downstream transcription factor in the HOG1-MAPK pathway. Plays crucial roles in the regulation of conidiation, virulence and multi-stress responses. In addition to regulating the expression of genes specifically involved in stress-response, conidiation and virulence, controls also expression of cellular signaling factors. This Metarhizium robertsii (strain ARSEF 23 / ATCC MYA-3075) (Metarhizium anisopliae (strain ARSEF 23)) protein is C2H2-type transcription factor MSN2.